Reading from the N-terminus, the 505-residue chain is MTQTNNKHYIVALDQGTTSSRAIVLDRDANVVSVAQHEFTQIYPQSGWVEHDPMEIWATQSATLVEALAQAGIDHRQVAAIGITNQRETTVIWDKQSGRPIHNAIVWQCRRSAAICEELKRDSLEEHVRERTGLVIDPYFSATKIKWVLDHVEGSRERARRGELLFGTVDSWLIWKMTQGRVHVTDFTNAARTMLFDIHALDWDARLLEALDIPREMLPQVRSSSEVYGHACIAGGDEDDGIPIAGIAGDQQAALFGHMCVEPGQGKNTYGTGCFLLMNTGAKAVRSGHGLLTTIACGPRGEVAYALEGAIFNAGSTVQWLRDELKLIDDSFDSEYFATKVQDSNGVYLVPAFTGLGAPYWDPYARGAVFGLTRGVKADHLIRAALESIAYQTCDVLDAMQRDAGERLKALRVDGGAVSNNFLMQFQADLLGTPVERPAVKEVTALGAAYLAGLATGFWSGLDELRDKARIERVFEPACSEEKRRSLSAGWKKAVLRSQRWAEDD.

Thr17 is an ADP binding site. ATP-binding residues include Thr17, Thr18, and Ser19. Residue Thr17 coordinates sn-glycerol 3-phosphate. Arg21 is a binding site for ADP. Residues Arg87, Glu88, Tyr139, and Asp250 each coordinate sn-glycerol 3-phosphate. Residues Arg87, Glu88, Tyr139, Asp250, and Gln251 each coordinate glycerol. 2 residues coordinate ADP: Thr272 and Gly315. 4 residues coordinate ATP: Thr272, Gly315, Gln319, and Gly416. 2 residues coordinate ADP: Gly416 and Asn420.

This sequence belongs to the FGGY kinase family.

It catalyses the reaction glycerol + ATP = sn-glycerol 3-phosphate + ADP + H(+). The protein operates within polyol metabolism; glycerol degradation via glycerol kinase pathway; sn-glycerol 3-phosphate from glycerol: step 1/1. With respect to regulation, inhibited by fructose 1,6-bisphosphate (FBP). Its function is as follows. Key enzyme in the regulation of glycerol uptake and metabolism. Catalyzes the phosphorylation of glycerol to yield sn-glycerol 3-phosphate. This Azotobacter vinelandii (strain DJ / ATCC BAA-1303) protein is Glycerol kinase.